A 206-amino-acid polypeptide reads, in one-letter code: Probable GTP-binding protein EngB (206 aa).

In terms of domain architecture, EngB-type G spans 23-197 (QGIEVAFAGR…ERVLDKWFGY (175 aa)). GTP-binding positions include 31 to 38 (GRSNAGKS), 58 to 62 (GRTQL), 76 to 79 (DLPG), 143 to 146 (TKAD), and 176 to 178 (FSS). Mg(2+) is bound by residues S38 and T60.

This sequence belongs to the TRAFAC class TrmE-Era-EngA-EngB-Septin-like GTPase superfamily. EngB GTPase family. Requires Mg(2+) as cofactor.

Functionally, necessary for normal cell division and for the maintenance of normal septation. The chain is Probable GTP-binding protein EngB from Pseudoalteromonas atlantica (strain T6c / ATCC BAA-1087).